The chain runs to 159 residues: Phosphopantetheine adenylyltransferase (159 aa).

Residue S8 participates in substrate binding. Residues 8–9 (SF) and H16 contribute to the ATP site. Positions 40, 72, and 86 each coordinate substrate. Residues 87–89 (GVR), E97, and 122–128 (YAALRSS) each bind ATP.

This sequence belongs to the bacterial CoaD family. Homohexamer. It depends on Mg(2+) as a cofactor.

The protein localises to the cytoplasm. It catalyses the reaction (R)-4'-phosphopantetheine + ATP + H(+) = 3'-dephospho-CoA + diphosphate. The protein operates within cofactor biosynthesis; coenzyme A biosynthesis; CoA from (R)-pantothenate: step 4/5. Functionally, reversibly transfers an adenylyl group from ATP to 4'-phosphopantetheine, yielding dephospho-CoA (dPCoA) and pyrophosphate. This is Phosphopantetheine adenylyltransferase from Treponema pallidum (strain Nichols).